The primary structure comprises 188 residues: CASP-like protein 4B1 (188 aa).

The interval 1–34 (MTNPDNMKPVEATDVESAAEKTSEPTPASGTSTI) is disordered. The Cytoplasmic portion of the chain corresponds to 1-46 (MTNPDNMKPVEATDVESAAEKTSEPTPASGTSTITQRWKREDLIKK). Positions 24-34 (EPTPASGTSTI) are enriched in polar residues. The helical transmembrane segment at 47–67 (ASPITRGICLLFSLIAFLIMV) threads the bilayer. Residues 68–84 (SNKHGYGRNFNDYEEYR) are Extracellular-facing. Residues 85–105 (YVLAISIISTLYTAWQTFAHF) traverse the membrane as a helical segment. Residues 106-124 (SKREIFDRRTSILVDFSGD) are Cytoplasmic-facing. The helical transmembrane segment at 125–145 (QIVAYLLISAASSAIPLTNIF) threads the bilayer. At 146-156 (REGQDNIFTDS) the chain is on the extracellular side. Residues 157–177 (AASAISMAIFAFIALALSALF) traverse the membrane as a helical segment. Residues 178 to 188 (SGYKLSTHSFI) lie on the Cytoplasmic side of the membrane.

This sequence belongs to the Casparian strip membrane proteins (CASP) family. Homodimer and heterodimers.

It localises to the cell membrane. This Arabidopsis thaliana (Mouse-ear cress) protein is CASP-like protein 4B1.